We begin with the raw amino-acid sequence, 1133 residues long: Myb-binding protein 1A (1133 aa).

4 disordered regions span residues 1–62 (MKSK…ENTA), 718–764 (PLSK…DAES), 924–943 (GEEH…SRQA), and 1111–1133 (KKVA…EEST). 2 stretches are compositionally biased toward basic and acidic residues: residues 20 to 35 (KAKE…KSEA) and 50 to 60 (EKPAETEEKEN). Acidic residues-rich tracts occupy residues 725-735 (GEEESDDELDK) and 744-762 (DDSE…EDDA).

Belongs to the MYBBP1A family. As to quaternary structure, interacts with nclb.

The protein localises to the cytoplasm. It localises to the nucleus. It is found in the nucleolus. Functionally, has a role in rRNA biogenesis, cell proliferation and tissue growth by contributing to the localization of nclb to the nucleolus. This chain is Myb-binding protein 1A, found in Drosophila melanogaster (Fruit fly).